A 357-amino-acid polypeptide reads, in one-letter code: Ribosomal RNA large subunit methyltransferase M (357 aa).

S-adenosyl-L-methionine is bound by residues S183, 216-219, D235, D255, and D271; that span reads APGG. The Proton acceptor role is filled by K300.

It belongs to the class I-like SAM-binding methyltransferase superfamily. RNA methyltransferase RlmE family. RlmM subfamily. In terms of assembly, monomer.

It localises to the cytoplasm. The enzyme catalyses cytidine(2498) in 23S rRNA + S-adenosyl-L-methionine = 2'-O-methylcytidine(2498) in 23S rRNA + S-adenosyl-L-homocysteine + H(+). In terms of biological role, catalyzes the 2'-O-methylation at nucleotide C2498 in 23S rRNA. The sequence is that of Ribosomal RNA large subunit methyltransferase M from Pseudomonas savastanoi pv. phaseolicola (strain 1448A / Race 6) (Pseudomonas syringae pv. phaseolicola (strain 1448A / Race 6)).